Reading from the N-terminus, the 180-residue chain is ATP-dependent protease subunit HslV (180 aa).

Thr-6 is an active-site residue. Residues Ala-164, Cys-167, and Thr-170 each contribute to the Na(+) site.

It belongs to the peptidase T1B family. HslV subfamily. In terms of assembly, a double ring-shaped homohexamer of HslV is capped on each side by a ring-shaped HslU homohexamer. The assembly of the HslU/HslV complex is dependent on binding of ATP.

The protein localises to the cytoplasm. It catalyses the reaction ATP-dependent cleavage of peptide bonds with broad specificity.. With respect to regulation, allosterically activated by HslU binding. Its function is as follows. Protease subunit of a proteasome-like degradation complex believed to be a general protein degrading machinery. The polypeptide is ATP-dependent protease subunit HslV (Borrelia hermsii (strain HS1 / DAH)).